A 564-amino-acid chain; its full sequence is 2-succinyl-5-enolpyruvyl-6-hydroxy-3-cyclohexene-1-carboxylate synthase (564 aa).

Belongs to the TPP enzyme family. MenD subfamily. In terms of assembly, homodimer. The cofactor is Mg(2+). Mn(2+) is required as a cofactor. Thiamine diphosphate serves as cofactor.

It catalyses the reaction isochorismate + 2-oxoglutarate + H(+) = 5-enolpyruvoyl-6-hydroxy-2-succinyl-cyclohex-3-ene-1-carboxylate + CO2. The protein operates within quinol/quinone metabolism; 1,4-dihydroxy-2-naphthoate biosynthesis; 1,4-dihydroxy-2-naphthoate from chorismate: step 2/7. It participates in quinol/quinone metabolism; menaquinone biosynthesis. In terms of biological role, catalyzes the thiamine diphosphate-dependent decarboxylation of 2-oxoglutarate and the subsequent addition of the resulting succinic semialdehyde-thiamine pyrophosphate anion to isochorismate to yield 2-succinyl-5-enolpyruvyl-6-hydroxy-3-cyclohexene-1-carboxylate (SEPHCHC). This chain is 2-succinyl-5-enolpyruvyl-6-hydroxy-3-cyclohexene-1-carboxylate synthase, found in Photorhabdus laumondii subsp. laumondii (strain DSM 15139 / CIP 105565 / TT01) (Photorhabdus luminescens subsp. laumondii).